Here is a 2225-residue protein sequence, read N- to C-terminus: Nonribisomal peptide synthetase notE' (2225 aa).

Residues 24–59 (TVRESLSSSPSPLPSLASPVSSGSEPPAFGETQPQS) form a disordered region. Low complexity predominate over residues 28-49 (SLSSSPSPLPSLASPVSSGSEP). Residues 83 to 482 (QERCKEAPQS…GRRDGQLKIR (400 aa)) form an adenylation 1 region. The Carrier 1 domain occupies 614–690 (SPTTATELML…EQAQRATPMT (77 aa)). Ser-651 is modified (O-(pantetheine 4'-phosphoryl)serine). The tract at residues 730-1142 (EDIYPCTPLQ…DLASPLDQDL (413 aa)) is condensation 1. Residues 1164–1563 (AQAMQQPSRQ…GRRDTQVKVR (400 aa)) are adenylation 2. Residues 1699-1775 (PVSHGAELRL…DLARCTGEEQ (77 aa)) enclose the Carrier 2 domain. Ser-1736 bears the O-(pantetheine 4'-phosphoryl)serine mark. The condensation 2 stretch occupies residues 1827–2138 (FAFHGEVSID…FILQHQNIDM (312 aa)).

It belongs to the NRP synthetase family.

The enzyme catalyses L-proline + L-tryptophan + 2 ATP = brevianamide F + 2 AMP + 2 diphosphate + 2 H(+). The protein operates within alkaloid biosynthesis. Its function is as follows. Nonribisomal peptide synthetase; part of the gene cluster that mediates the biosynthesis of notoamide, a fungal indole alkaloid that belongs to a family of natural products containing a characteristic bicyclo[2.2.2]diazaoctane core. The first step of notoamide biosynthesis involves coupling of L-proline and L-tryptophan by the bimodular NRPS notE', to produce cyclo-L-tryptophan-L-proline called brevianamide F. The reverse prenyltransferase notF' then acts as a deoxybrevianamide E synthase and converts brevianamide F to deoxybrevianamide E via reverse prenylation at C-2 of the indole ring leading to the bicyclo[2.2.2]diazaoctane core. Deoxybrevianamide E is further hydroxylated at C-6 of the indole ring, likely catalyzed by the cytochrome P450 monooxygenase notG', to yield 6-hydroxy-deoxybrevianamide E. 6-hydroxy-deoxybrevianamide E is a specific substrate of the prenyltransferase notC' for normal prenylation at C-7 to produce 6-hydroxy-7-prenyl-deoxybrevianamide, also called notoamide S. As the proposed pivotal branching point in notoamide biosynthesis, notoamide S can be diverted to notoamide E through an oxidative pyran ring closure putatively catalyzed by either notH' cytochrome P450 monooxygenase or the notD' FAD-linked oxidoreductase. This step would be followed by an indole 2,3-epoxidation-initiated pinacol-like rearrangement catalyzed by the notB' FAD-dependent monooxygenase leading to the formation of notoamide C and notoamide D. On the other hand notoamide S is converted to notoamide T by notH' (or notD'), a bifunctional oxidase that also functions as the intramolecular Diels-Alderase responsible for generation of (-)-notoamide T. To generate antipodal (+)-notoaminide T, notH (or notD) in Aspergillus strain MF297-2 is expected to catalyze a Diels-Alder reaction leading to the opposite stereochemistry. The remaining oxidoreductase notD' (or notH') likely catalyzes the oxidative pyran ring formation to yield (-)-stephacidin A. The FAD-dependent monooxygenase notI' is highly similar to notB' and is predicted to catalyze a similar conversion from (-)-stephacidin A to (+)-notoamide B via the 2,3-epoxidation of (-)-stephacidin A followed by a pinacol-type rearrangement. Finally, it remains unclear which enzyme could be responsible for the final hydroxylation steps leading to notoamide A and sclerotiamide. The polypeptide is Nonribisomal peptide synthetase notE' (Aspergillus versicolor).